A 131-amino-acid polypeptide reads, in one-letter code: Protein NrdI (131 aa).

It belongs to the NrdI family.

In terms of biological role, probably involved in ribonucleotide reductase function. This Bacillus licheniformis (strain ATCC 14580 / DSM 13 / JCM 2505 / CCUG 7422 / NBRC 12200 / NCIMB 9375 / NCTC 10341 / NRRL NRS-1264 / Gibson 46) protein is Protein NrdI.